Consider the following 206-residue polypeptide: High frequency lysogenization protein HflD homolog (206 aa).

Belongs to the HflD family.

The protein resides in the cytoplasm. It is found in the cell inner membrane. The sequence is that of High frequency lysogenization protein HflD homolog from Pseudomonas syringae pv. tomato (strain ATCC BAA-871 / DC3000).